The sequence spans 272 residues: Eukaryotic translation initiation factor 4E homolog (272 aa).

Residues 249 to 272 are disordered; sequence GKLNSGRKPSNTRGGFSSFGNKRY. A compositionally biased stretch (polar residues) spans 255–272; sequence RKPSNTRGGFSSFGNKRY.

Belongs to the eukaryotic initiation factor 4E family.

Its function is as follows. Recognizes and binds the 7-methylguanosine-containing mRNA cap during an early step in the initiation of protein synthesis and facilitates ribosome binding by inducing the unwinding of the mRNAs secondary structures. The protein is Eukaryotic translation initiation factor 4E homolog of Acanthamoeba polyphaga mimivirus (APMV).